A 208-amino-acid chain; its full sequence is Fibroblast growth factor 6 (208 aa).

The signal sequence occupies residues 1–37; sequence MALGQKLFITMSRGAGRLQGTLWALVFLGILVGMVVP. N45 is a glycosylation site (N-linked (GlcNAc...) asparagine). A disulfide bridge connects residues C90 and C157.

The protein belongs to the heparin-binding growth factors family. As to quaternary structure, interacts with FGFR1, FGFR2 and FGFR4. Affinity between fibroblast growth factors (FGFs) and their receptors is increased by heparan sulfate glycosaminoglycans that function as coreceptors. Leukemia cell lines with platelet/ megakaryocytic differentiation potential.

It localises to the secreted. The protein localises to the extracellular space. Plays an important role in the regulation of cell proliferation, cell differentiation, angiogenesis and myogenesis, and is required for normal muscle regeneration. The chain is Fibroblast growth factor 6 (FGF6) from Homo sapiens (Human).